The chain runs to 159 residues: Histone H2A (159 aa).

The span at 1–10 shows a compositional bias: gly residues; the sequence is MDSTGTGAGG. 2 disordered regions span residues 1–31 and 133–159; these read MDSTGTGAGGKGKKGAAGRKVGGPRKKSVSR and KTAEKASSGGSKEAKSPKKAAKSPKKA. Basic residues-rich tracts occupy residues 11 to 29 and 149 to 159; these read KGKKGAAGRKVGGPRKKSV and PKKAAKSPKKA. 2 consecutive short sequence motifs (SPKK motif) follow at residues 148–151 and 155–158; these read SPKK.

It belongs to the histone H2A family. As to quaternary structure, the nucleosome is a histone octamer containing two molecules each of H2A, H2B, H3 and H4 assembled in one H3-H4 heterotetramer and two H2A-H2B heterodimers. The octamer wraps approximately 147 bp of DNA.

The protein localises to the nucleus. It localises to the chromosome. Its function is as follows. Core component of nucleosome. Nucleosomes wrap and compact DNA into chromatin, limiting DNA accessibility to the cellular machineries which require DNA as a template. Histones thereby play a central role in transcription regulation, DNA repair, DNA replication and chromosomal stability. DNA accessibility is regulated via a complex set of post-translational modifications of histones, also called histone code, and nucleosome remodeling. In Zea mays (Maize), this protein is Histone H2A.